The following is a 529-amino-acid chain: Hyaluronidase PH-20 (529 aa).

An N-terminal signal peptide occupies residues 1–35 (MGAFTFKHSFFGSFVECSGVLQTVFIFLLIPCCLA). Intrachain disulfides connect Cys59–Cys351 and Cys223–Cys237. Asn81 carries an N-linked (GlcNAc...) asparagine glycan. The active-site Proton donor is Glu147. Residues Asn165 and Asn179 are each glycosylated (N-linked (GlcNAc...) asparagine). N-linked (GlcNAc...) asparagine glycans are attached at residues Asn253 and Asn368. Disulfide bonds link Cys376/Cys387, Cys381/Cys435, and Cys437/Cys464. Residue Asn401 is glycosylated (N-linked (GlcNAc...) asparagine). Positions 478-502 (DEPPITDDTSQNQDSISDITSSAPP) are disordered. Residues 487–502 (SQNQDSISDITSSAPP) are compositionally biased toward polar residues. The GPI-anchor amidated serine moiety is linked to residue Ser492. Residues 493 to 529 (ISDITSSAPPSSHILPKDLSWCLFLLSIFSQHWKYLL) constitute a propeptide, removed in mature form.

The protein belongs to the glycosyl hydrolase 56 family. Post-translationally, endoproteolysis (toward the C-terminus producing two disulfide-linked fragments) could activate PH-20. In terms of tissue distribution, testis.

Its subcellular location is the cell membrane. It catalyses the reaction Random hydrolysis of (1-&gt;4)-linkages between N-acetyl-beta-D-glucosamine and D-glucuronate residues in hyaluronate.. Involved in sperm-egg adhesion. Upon fertilization sperm must first penetrate a layer of cumulus cells that surrounds the egg before reaching the zona pellucida. The cumulus cells are embedded in a matrix containing hyaluronic acid which is formed prior to ovulation. This protein aids in penetrating the layer of cumulus cells by digesting hyaluronic acid. The protein is Hyaluronidase PH-20 (SPAM1) of Cavia porcellus (Guinea pig).